The sequence spans 190 residues: Selenoprotein S (190 aa).

Residues 28–48 (SLLASYGWYILFSCILLYIVI) traverse the membrane as a helical segment. The tract at residues 78-90 (RQEALAAARLRMQ) is VCP/p97-interacting motif (VIM). Residues 115–190 (KIEMWDSMQE…RRGPSSGGUN (76 aa)) are disordered. The segment covering 160 to 174 (RGGGYNPLTGEGGGT) has biased composition (gly residues). Selenocysteine 189 is a non-standard amino acid (selenocysteine).

The protein belongs to the selenoprotein S family. In terms of assembly, interacts with DERL1 and (via VIM motif) with VCP, suggesting that it forms a membrane complex with DERL1 that serves as a receptor for VCP. Also interacts with DERL2, DERL3 and SELENOK. The SELENOK-SELENOS complex interacts with VCP. Interacts with CCDC47. Post-translationally, truncated SELENOS proteins produced by failed UGA/Sec decoding are ubiquitinated by the CRL2(KLHDC2) and CRL2(KLHDC3) complexes, which recognizes the glycine (Gly) at the C-terminus of truncated SELENOS proteins. Truncated SELENOS proteins produced by failed UGA/Sec decoding are also ubiquitinated by the CRL5(KLHDC1) complex.

The protein localises to the endoplasmic reticulum membrane. Its subcellular location is the cytoplasm. Functionally, involved in the degradation process of misfolded endoplasmic reticulum (ER) luminal proteins. Participates in the transfer of misfolded proteins from the ER to the cytosol, where they are destroyed by the proteasome in a ubiquitin-dependent manner. Probably acts by serving as a linker between DERL1, which mediates the retrotranslocation of misfolded proteins into the cytosol, and the ATPase complex VCP, which mediates the translocation and ubiquitination. The polypeptide is Selenoprotein S (Mus musculus (Mouse)).